Reading from the N-terminus, the 877-residue chain is DNA mismatch repair protein MutS (877 aa).

An ATP-binding site is contributed by 630–637 (GPNMAGKS).

It belongs to the DNA mismatch repair MutS family.

Its function is as follows. This protein is involved in the repair of mismatches in DNA. It is possible that it carries out the mismatch recognition step. This protein has a weak ATPase activity. This is DNA mismatch repair protein MutS from Jannaschia sp. (strain CCS1).